The primary structure comprises 97 residues: Protein RESPONSE TO LOW SULFUR 3 (97 aa).

The stretch at 8 to 42 forms a coiled coil; it reads VTVAAEEVEELRRRNGELEREMEEMKKEMVQLWRR.

This is Protein RESPONSE TO LOW SULFUR 3 from Arabidopsis thaliana (Mouse-ear cress).